The following is a 488-amino-acid chain: Germacrene A hydroxylase (488 aa).

The Cytoplasmic portion of the chain corresponds to 1–6; sequence MELSFT. The helical; Signal-anchor for type II membrane protein transmembrane segment at 7–23 threads the bilayer; sequence TSIAVATIVFVLFKLAT. The Lumenal segment spans residues 24 to 488; that stretch reads RPKSNKKLLP…KTHLVLVPSF (465 aa). N-linked (GlcNAc...) asparagine glycans are attached at residues Asn255, Asn260, and Asn379. Cys432 contributes to the heme binding site.

It belongs to the cytochrome P450 family. It depends on heme as a cofactor.

Its subcellular location is the endoplasmic reticulum membrane. The enzyme catalyses (+)-(R)-germacrene A + 3 reduced [NADPH--hemoprotein reductase] + 3 O2 = germacra-1(10),4,11(13)-trien-12-oate + 3 oxidized [NADPH--hemoprotein reductase] + 4 H2O + 4 H(+). Its pathway is secondary metabolite biosynthesis; terpenoid biosynthesis. Its function is as follows. Involved in the biosynthesis of germacrene-derived sesquiterpene lactones. Catalyzes three consecutive oxidations of germacrene A to produce germacrene A acid. Could also catalyze the three-step oxidation of non-natural substrate amorphadiene to artemisinic acid. The sequence is that of Germacrene A hydroxylase from Saussurea costus (Costus).